The following is a 381-amino-acid chain: MIISASTDYRAAAQRKLPPFLFHYIDGGAYAEYTLRRNVEDLSAIALRQRVLKNMSELSLETRLFDETLAMPVALAPVGLTGMYARRGEVQAARAAAAKGVPFTLSTVSVCPIEEVAPAIDRPMWFQLYVLKDRGFMRNALERAKAAGVTTLVFTVDMPVPGARYRDAHSGMSGPYAAPRRILQAMTHPAWAWDVGLLGKPHDLGNISAYRGNPTGLEDYIGWLGANFDPSISWKDLEWIREFWDGPMVIKGILDPEDARDAVKFGADGIVVSNHGGRQLDGVLSSARALPAIADAVKGELAILADSGIRTGLDVVRMIALGADSVLLGRAFVYALAAAGEAGVRNLLELIEKEMRVAMVLTGAKSIGEISADSLVRELGA.

In terms of domain architecture, FMN hydroxy acid dehydrogenase spans 1-380 (MIISASTDYR…SADSLVRELG (380 aa)). A substrate-binding site is contributed by Y24. Positions 106 and 127 each coordinate FMN. Substrate is bound at residue Y129. An FMN-binding site is contributed by T155. R164 serves as a coordination point for substrate. Residue K251 coordinates FMN. Residue H275 is the Proton acceptor of the active site. R278 is a substrate binding site. 306–330 (DSGIRTGLDVVRMIALGADSVLLGR) contributes to the FMN binding site.

The protein belongs to the FMN-dependent alpha-hydroxy acid dehydrogenase family. As to quaternary structure, homotetramer. FMN serves as cofactor.

Its subcellular location is the cell inner membrane. It carries out the reaction (S)-lactate + A = pyruvate + AH2. Its function is as follows. Catalyzes the conversion of L-lactate to pyruvate. Is coupled to the respiratory chain. In Pseudomonas aeruginosa (strain LESB58), this protein is L-lactate dehydrogenase.